A 563-amino-acid polypeptide reads, in one-letter code: NAD-dependent malic enzyme (563 aa).

Tyr-101 acts as the Proton donor in catalysis. Arg-154 is a binding site for NAD(+). Lys-172 (proton acceptor) is an active-site residue. Glu-243, Asp-244, and Asp-267 together coordinate a divalent metal cation. Asp-267 and Asn-416 together coordinate NAD(+).

This sequence belongs to the malic enzymes family. As to quaternary structure, homotetramer. Mg(2+) is required as a cofactor. Mn(2+) serves as cofactor.

It carries out the reaction (S)-malate + NAD(+) = pyruvate + CO2 + NADH. The catalysed reaction is oxaloacetate + H(+) = pyruvate + CO2. The sequence is that of NAD-dependent malic enzyme from Pseudomonas syringae pv. syringae (strain B728a).